Consider the following 270-residue polypeptide: tRNA pseudouridine synthase A (270 aa).

Asp60 acts as the Nucleophile in catalysis. An RNA binding region spans residues Phe107–Phe111. Tyr118 serves as a coordination point for substrate. The segment at Gln168–Arg172 is interaction with tRNA.

This sequence belongs to the tRNA pseudouridine synthase TruA family. Homodimer.

The catalysed reaction is uridine(38/39/40) in tRNA = pseudouridine(38/39/40) in tRNA. Its function is as follows. Formation of pseudouridine at positions 38, 39 and 40 in the anticodon stem and loop of transfer RNAs. This Escherichia coli (strain K12 / DH10B) protein is tRNA pseudouridine synthase A.